The chain runs to 261 residues: Lysoplasmalogenase (261 aa).

8 consecutive transmembrane segments (helical) span residues 29–49, 65–85, 90–107, 111–133, 146–166, 172–192, 197–217, and 227–247; these read GWVV…VIAL, PAFK…HPIG, WLVP…LLAI, TWAF…GALL, VAAV…FWPH, LTIP…TALL, TIWT…IGIG, and AVPI…GFFF.

It belongs to the TMEM86 family.

The protein localises to the cell membrane. The enzyme catalyses a 1-O-(1Z-alkenyl)-sn-glycero-3-phosphocholine + H2O = a 2,3-saturated aldehyde + sn-glycerol 3-phosphocholine. It catalyses the reaction a 1-O-(1Z-alkenyl)-sn-glycero-3-phosphoethanolamine + H2O = a 2,3-saturated aldehyde + sn-glycero-3-phosphoethanolamine. Specifically hydrolyzes the vinyl ether bond of lysoplasmenylcholine (pLPC) and lysoplasmenylethanolamine (pLPE) to release a fatty aldehyde and glycerophospho-choline or glycerophospho-ethanolamine. In Mycobacterium bovis (strain ATCC BAA-935 / AF2122/97), this protein is Lysoplasmalogenase.